The chain runs to 269 residues: MAFSPANSFLINKSICESKEVEPLEANLFGKLHNKLLICKAKKENLEKKLAYQMMYSKLLKSLPKLSSLEENKLTKLKAPIEDMENTKKELEEIRKQSTETELRYLKSLSNTLSFGTLSLSNEINKVGPSASFMLKEVHDSVQVLEQRLEKMGLIEKPSESSESSIYSILASLKHTNDSLQKKELSPHEIAESPSSHSTSPMGRNVDTETLSFLLIDWQRLCAEQNTFLRDITNNMSSSVPQDVLSQLRQFFFRSELLSDKLSNLCSES.

A compositionally biased stretch (basic and acidic residues) spans 181–191 (QKKELSPHEIA). The tract at residues 181-203 (QKKELSPHEIAESPSSHSTSPMG) is disordered. Residues 193–202 (SPSSHSTSPM) are compositionally biased toward polar residues. Phosphoserine is present on Ser200.

This is an uncharacterized protein from Schizosaccharomyces pombe (strain 972 / ATCC 24843) (Fission yeast).